The chain runs to 511 residues: Maturase K (511 aa).

The protein belongs to the intron maturase 2 family. MatK subfamily.

It is found in the plastid. It localises to the chloroplast. Its function is as follows. Usually encoded in the trnK tRNA gene intron. Probably assists in splicing its own and other chloroplast group II introns. The chain is Maturase K from Acorus calamus var. americanus (American sweet flag).